A 418-amino-acid polypeptide reads, in one-letter code: Voltage-gated ClC-type chloride channel ClcB (418 aa).

Over 1 to 4 (MFRR) the chain is Cytoplasmic. Residues 5 to 25 (LLIATVVGILAVFAVAGFRHA) form a helical membrane-spanning segment. The Periplasmic segment spans residues 26-53 (MLLLEWLFLNNDSGSLVNAATNLSSWRR). The helical transmembrane segment at 54–74 (LLTPALGGLAAGLLLMGWQKF) threads the bilayer. Residues 75–145 (TQQRPHAPTD…QRFTPRQEWK (71 aa)) are Cytoplasmic-facing. The helical transmembrane segment at 146–166 (LWIACGAAAGMAAAYRAPLAG) threads the bilayer. The Periplasmic segment spans residues 167 to 172 (SLFIAE). A helical transmembrane segment spans residues 173–193 (VLFGTMMLASLGPVIISAIVA). The Cytoplasmic portion of the chain corresponds to 194-221 (WLVSNLINHSDALLYNVQLSVTVQARDY). Residues 222 to 242 (ALIISTGVLAGLCGPLLLTLM) form a helical membrane-spanning segment. Topologically, residues 243–257 (NACHRGFVSLKLAPP) are periplasmic. A helical membrane pass occupies residues 258-278 (WQLALGGLIVGLLSLFTPAVW). The Cytoplasmic segment spans residues 279-290 (GNGYSTVQSFLT). Residues 291–311 (APPLLMIIAGIFLCKLCAVLA) traverse the membrane as a helical segment. At 312–315 (SSGS) the chain is on the periplasmic side. Residues 316–336 (GAPGGVFTPTLFIGLAIGMLY) traverse the membrane as a helical segment. Residues 337–351 (GRSLGLWFPDGEEIT) lie on the Cytoplasmic side of the membrane. Residues 352-372 (LLLGLTGMATLLAATTHAPIM) traverse the membrane as a helical segment. The Periplasmic segment spans residues 373–379 (STLMICE). The chain crosses the membrane as a helical span at residues 380-400 (MTGEYQLLPGLLIACVIASVI). The Cytoplasmic portion of the chain corresponds to 401-418 (SRTLHRDSIYRQHTAQHS).

This sequence belongs to the chloride channel (TC 2.A.49) family. ClcB subfamily.

The protein resides in the cell inner membrane. Probably acts as an electrical shunt for an outwardly-directed proton pump that is linked to amino acid decarboxylation, as part of the extreme acid resistance (XAR) response. This chain is Voltage-gated ClC-type chloride channel ClcB (clcB), found in Shigella flexneri.